A 202-amino-acid chain; its full sequence is Superoxide dismutase [Mn] (202 aa).

H27 lines the Mn(2+) pocket. 2 positions are modified to phosphothreonine: T34 and T70. Mn(2+) is bound by residues H82, D164, and H168.

It belongs to the iron/manganese superoxide dismutase family. Homodimer. Mn(2+) serves as cofactor.

It catalyses the reaction 2 superoxide + 2 H(+) = H2O2 + O2. Functionally, destroys superoxide anion radicals which are normally produced within the cells and which are toxic to biological systems. The polypeptide is Superoxide dismutase [Mn] (sodA) (Halalkalibacterium halodurans (strain ATCC BAA-125 / DSM 18197 / FERM 7344 / JCM 9153 / C-125) (Bacillus halodurans)).